A 425-amino-acid polypeptide reads, in one-letter code: UDP-N-acetylglucosamine 1-carboxyvinyltransferase (425 aa).

A phosphoenolpyruvate-binding site is contributed by 22 to 23 (KN). Arg98 provides a ligand contact to UDP-N-acetyl-alpha-D-glucosamine. Cys122 acts as the Proton donor in catalysis. Position 122 is a 2-(S-cysteinyl)pyruvic acid O-phosphothioketal (Cys122). UDP-N-acetyl-alpha-D-glucosamine contacts are provided by residues 127 to 131 (RPVDQ), Asp313, and Ile335.

Belongs to the EPSP synthase family. MurA subfamily.

Its subcellular location is the cytoplasm. It carries out the reaction phosphoenolpyruvate + UDP-N-acetyl-alpha-D-glucosamine = UDP-N-acetyl-3-O-(1-carboxyvinyl)-alpha-D-glucosamine + phosphate. It functions in the pathway cell wall biogenesis; peptidoglycan biosynthesis. Cell wall formation. Adds enolpyruvyl to UDP-N-acetylglucosamine. This chain is UDP-N-acetylglucosamine 1-carboxyvinyltransferase, found in Xylella fastidiosa (strain M12).